The chain runs to 201 residues: Recombination protein RecR (201 aa).

A C4-type zinc finger spans residues 57 to 72; the sequence is CTHCRTFTEEESCAIC. The Toprim domain maps to 81–176; it reads GFLCVVEQPS…KVSRIAHGIP (96 aa).

It belongs to the RecR family.

May play a role in DNA repair. It seems to be involved in an RecBC-independent recombinational process of DNA repair. It may act with RecF and RecO. The protein is Recombination protein RecR of Histophilus somni (strain 2336) (Haemophilus somnus).